The sequence spans 148 residues: Large ribosomal subunit protein bL9 (148 aa).

This sequence belongs to the bacterial ribosomal protein bL9 family.

Its function is as follows. Binds to the 23S rRNA. The chain is Large ribosomal subunit protein bL9 from Marinobacter nauticus (strain ATCC 700491 / DSM 11845 / VT8) (Marinobacter aquaeolei).